Consider the following 206-residue polypeptide: Transmembrane 4 L6 family member 19 (206 aa).

At 1-16 (MLSFSRVVNCSRTCSR) the chain is on the cytoplasmic side. A helical transmembrane segment spans residues 17–37 (FLGLSLGTASLCAAGANIALL). The Extracellular portion of the chain corresponds to 38–54 (FPNWDVTYLMRGLIGKH). A helical transmembrane segment spans residues 55–75 (AMLGSGLWGGGLMVLLAATLI). Residues 76-89 (SMTGSFSKSAPCLQ) lie on the Cytoplasmic side of the membrane. A helical transmembrane segment spans residues 90–110 (VLIALLSSGLALLGAVICFVT). Residues 111 to 171 (SGVALKDGPF…PSKAVVWHVA (61 aa)) are Extracellular-facing. Asparagine 129 is a glycosylation site (N-linked (GlcNAc...) asparagine). Residues 172 to 192 (FFSILLCISLLQLLLVAIHLV) form a helical membrane-spanning segment. The important for homodimerization stretch occupies residues 182–192 (LQLLLVAIHLV). At 193–206 (NSILGLFCSFCEKH) the chain is on the cytoplasmic side.

It belongs to the L6 tetraspanin family. As to quaternary structure, may form homodimers and homooligomers. Interacts with integrins ITGAV and ITGB3. Interacts with components of members of the V0 complex of vacuolar(H+)-ATPase (V-ATPase), including ATP6V0B and ATP6V0D2; this interaction inhibits V1-V0 complex assembly. As to expression, predominantly expressed in osteoclasts (at protein level). Also expressed in white adipose tissue, as well as in bone marrow-derived macrophages.

It localises to the lysosome membrane. The protein resides in the cytoplasm. It is found in the cytoskeleton. Its subcellular location is the cell projection. The protein localises to the filopodium. Functionally, negatively regulates vacuolar (H+)-ATPase (V-ATPase) activity by interacting with members of V-ATPase V0 complex and hence inhibiting V1-V0 assembly. Required for multinucleation during osteoclast differentiation. This Mus musculus (Mouse) protein is Transmembrane 4 L6 family member 19 (Tm4sf19).